Here is a 481-residue protein sequence, read N- to C-terminus: 3-isopropylmalate dehydratase large subunit (481 aa).

[4Fe-4S] cluster contacts are provided by cysteine 363, cysteine 423, and cysteine 426. The segment at 434 to 465 (LRPGQRAASTSNRNFEGRQGRGGRTHLVSPPV) is disordered.

The protein belongs to the aconitase/IPM isomerase family. LeuC type 1 subfamily. As to quaternary structure, heterodimer of LeuC and LeuD. Requires [4Fe-4S] cluster as cofactor.

It carries out the reaction (2R,3S)-3-isopropylmalate = (2S)-2-isopropylmalate. The protein operates within amino-acid biosynthesis; L-leucine biosynthesis; L-leucine from 3-methyl-2-oxobutanoate: step 2/4. In terms of biological role, catalyzes the isomerization between 2-isopropylmalate and 3-isopropylmalate, via the formation of 2-isopropylmaleate. This Salinispora tropica (strain ATCC BAA-916 / DSM 44818 / JCM 13857 / NBRC 105044 / CNB-440) protein is 3-isopropylmalate dehydratase large subunit.